Consider the following 175-residue polypeptide: NADH-ubiquinone oxidoreductase chain 6 (175 aa).

Transmembrane regions (helical) follow at residues 1–21 (MMTY…VGFS), 25–45 (SPIY…GIIM), 47–67 (FGGS…MLVV), 88–108 (TVMG…LYVL), and 149–169 (YGAW…LVIL).

Belongs to the complex I subunit 6 family. Core subunit of respiratory chain NADH dehydrogenase (Complex I) which is composed of 45 different subunits.

It is found in the mitochondrion inner membrane. It carries out the reaction a ubiquinone + NADH + 5 H(+)(in) = a ubiquinol + NAD(+) + 4 H(+)(out). In terms of biological role, core subunit of the mitochondrial membrane respiratory chain NADH dehydrogenase (Complex I) which catalyzes electron transfer from NADH through the respiratory chain, using ubiquinone as an electron acceptor. Essential for the catalytic activity and assembly of complex I. In Equus caballus (Horse), this protein is NADH-ubiquinone oxidoreductase chain 6 (MT-ND6).